The chain runs to 179 residues: Cell division protein SepF (179 aa).

Residues 18–55 are disordered; the sequence is EDSSLPYEKRDEPVFTPVNSSQEPALPMNQPSQSAGTK. Residues 34 to 55 are compositionally biased toward polar residues; that stretch reads PVNSSQEPALPMNQPSQSAGTK.

It belongs to the SepF family. Homodimer. Interacts with FtsZ.

Its subcellular location is the cytoplasm. Its function is as follows. Cell division protein that is part of the divisome complex and is recruited early to the Z-ring. Probably stimulates Z-ring formation, perhaps through the cross-linking of FtsZ protofilaments. Its function overlaps with FtsA. This chain is Cell division protein SepF, found in Streptococcus pneumoniae (strain ATCC 700669 / Spain 23F-1).